The primary structure comprises 329 residues: Mo25-like protein (329 aa).

Belongs to the Mo25 family.

This Schizosaccharomyces pombe (strain 972 / ATCC 24843) (Fission yeast) protein is Mo25-like protein (pmo25).